A 327-amino-acid chain; its full sequence is Delta(3,5)-Delta(2,4)-dienoyl-CoA isomerase, mitochondrial (327 aa).

The transit peptide at 1–33 (MATAMTVSSKLLGLLMQQLRGTRQLYFNVSLRS) directs the protein to the mitochondrion. Substrate-binding positions include 115-119 (SGIDL) and G173. K230 bears the N6-succinyllysine mark. Position 267 is a phosphoserine (S267). An N6-succinyllysine modification is found at K316. The Microbody targeting signal motif lies at 325–327 (SKL). At K326 the chain carries N6-acetyllysine.

This sequence belongs to the enoyl-CoA hydratase/isomerase family. Homohexamer. Expressed in heart and liver (at protein level).

The protein resides in the mitochondrion. It localises to the peroxisome. It carries out the reaction (3E,5Z)-octadienoyl-CoA = (2E,4E)-octadienoyl-CoA. The catalysed reaction is (3E,5Z,8Z,11Z,14Z)-eicosapentaenoyl-CoA = (2E,4E,8Z,11Z,14Z)-eicosapentaenoyl-CoA. Its pathway is lipid metabolism; fatty acid beta-oxidation. In terms of biological role, isomerization of 3-trans,5-cis-dienoyl-CoA to 2-trans,4-trans-dienoyl-CoA. The polypeptide is Delta(3,5)-Delta(2,4)-dienoyl-CoA isomerase, mitochondrial (Rattus norvegicus (Rat)).